The primary structure comprises 119 residues: Holo-[acyl-carrier-protein] synthase (119 aa).

2 residues coordinate Mg(2+): Asp8 and Glu58.

Belongs to the P-Pant transferase superfamily. AcpS family. It depends on Mg(2+) as a cofactor.

It localises to the cytoplasm. The enzyme catalyses apo-[ACP] + CoA = holo-[ACP] + adenosine 3',5'-bisphosphate + H(+). Transfers the 4'-phosphopantetheine moiety from coenzyme A to a Ser of acyl-carrier-protein. This chain is Holo-[acyl-carrier-protein] synthase, found in Bacillus cereus (strain G9842).